The primary structure comprises 63 residues: uncharacterized protein (63 aa).

This is an uncharacterized protein from Avena byzantina (Oat).